The chain runs to 1438 residues: Pyochelin synthetase PchE (1438 aa).

A Carrier 1 domain is found at Asp-6–Asp-85. Ser-46 bears the O-(pantetheine 4'-phosphoryl)serine mark. Positions Arg-136–Ala-442 are condensation/cyclization. An adenylation region spans residues Arg-563 to Arg-950. Positions Glu-1350–Thr-1425 constitute a Carrier 2 domain. O-(pantetheine 4'-phosphoryl)serine is present on Ser-1385.

It belongs to the NRP synthetase family. Requires pantetheine 4'-phosphate as cofactor.

It carries out the reaction holo-[peptidyl-carrier protein] + L-cysteine + ATP = L-cysteinyl-[peptidyl-carrier protein] + AMP + diphosphate. Its pathway is siderophore biosynthesis. The protein operates within antifungal biosynthesis. Its function is as follows. Involved in the biosynthesis of the siderophore pyochelin. Accepts salicylate activated by PchD at the first peptidyl carrier domain (ArCP), and activates and fixes one molecule of cysteine at the second peptidyl carrier domain (PCP1) via a thioester linkage to the phosphopanthetheine moiety. Then catalyzes the condensation reaction between the salicylate bound to the first site and the cysteine bound to the second site, and the cyclization of the cysteine to form the salicyl-thiazolinyl-S-PCP1 intermediate at the second site. When this intermediate is released by the action of a thioesterase, it produces the antifungal antibiotic dihydroaeruginoic acid (Dha or hydroxyphenyl-thiazolinyl-carboxylate). The protein is Pyochelin synthetase PchE of Pseudomonas aeruginosa (strain ATCC 15692 / DSM 22644 / CIP 104116 / JCM 14847 / LMG 12228 / 1C / PRS 101 / PAO1).